The following is a 292-amino-acid chain: Probable E3 ubiquitin-protein ligase RNF144A (292 aa).

Positions 16 to 236 (PLVSCKLCLG…YDKGPCRNKL (221 aa)) are TRIAD supradomain. 14 residues coordinate Zn(2+): Cys-20, Cys-23, Cys-43, Cys-46, Cys-111, Cys-116, Cys-135, Cys-138, Cys-143, Cys-146, His-151, Cys-156, Cys-185, and Cys-188. An RING-type 1 zinc finger spans residues 20–70 (CKLCLGEYTVEQMTTIAQCQCIFCTLCLKQYVELLIKEGLETAISCPDASC). Residues 91–156 (QKYKKLQFEK…KANWHPGQGC (66 aa)) form an IBR-type zinc finger. The RING-type 2; atypical zinc finger occupies 185–214 (CPKCKVYIERDEGCAQMMCKNCKHAFCWYC). Cys-198 is an active-site residue. Zn(2+) is bound by residues Cys-203, Cys-206, Cys-211, Cys-214, His-226, and Cys-232. Residues 250–270 (VVGIFAGFGLLLLVASPFLLL) form a helical membrane-spanning segment.

It belongs to the RBR family. RNF144 subfamily.

It localises to the membrane. The enzyme catalyses [E2 ubiquitin-conjugating enzyme]-S-ubiquitinyl-L-cysteine + [acceptor protein]-L-lysine = [E2 ubiquitin-conjugating enzyme]-L-cysteine + [acceptor protein]-N(6)-ubiquitinyl-L-lysine.. It participates in protein modification; protein ubiquitination. In terms of biological role, E3 ubiquitin-protein ligase which accepts ubiquitin from E2 ubiquitin-conjugating enzymes ube2l3 and ube2l6 in the form of a thioester and then directly transfers the ubiquitin to targeted substrates. The chain is Probable E3 ubiquitin-protein ligase RNF144A (rnf144a) from Xenopus tropicalis (Western clawed frog).